The chain runs to 178 residues: NAD(P)H-quinone oxidoreductase subunit J (178 aa).

It belongs to the complex I 30 kDa subunit family. In terms of assembly, NDH-1 can be composed of about 15 different subunits; different subcomplexes with different compositions have been identified which probably have different functions.

It is found in the cellular thylakoid membrane. The enzyme catalyses a plastoquinone + NADH + (n+1) H(+)(in) = a plastoquinol + NAD(+) + n H(+)(out). It carries out the reaction a plastoquinone + NADPH + (n+1) H(+)(in) = a plastoquinol + NADP(+) + n H(+)(out). NDH-1 shuttles electrons from an unknown electron donor, via FMN and iron-sulfur (Fe-S) centers, to quinones in the respiratory and/or the photosynthetic chain. The immediate electron acceptor for the enzyme in this species is believed to be plastoquinone. Couples the redox reaction to proton translocation, and thus conserves the redox energy in a proton gradient. Cyanobacterial NDH-1 also plays a role in inorganic carbon-concentration. The chain is NAD(P)H-quinone oxidoreductase subunit J from Crocosphaera subtropica (strain ATCC 51142 / BH68) (Cyanothece sp. (strain ATCC 51142)).